Consider the following 180-residue polypeptide: Large ribosomal subunit protein uL16 (180 aa).

It belongs to the universal ribosomal protein uL16 family.

This Pyrobaculum aerophilum (strain ATCC 51768 / DSM 7523 / JCM 9630 / CIP 104966 / NBRC 100827 / IM2) protein is Large ribosomal subunit protein uL16.